Consider the following 382-residue polypeptide: Dual-specificity RNA methyltransferase RlmN (382 aa).

Residue Glu95 is the Proton acceptor of the active site. Residues 101 to 348 enclose the Radical SAM core domain; that stretch reads EDDRGTLCIS…TTVRKTRGDD (248 aa). The cysteines at positions 108 and 353 are disulfide-linked. [4Fe-4S] cluster-binding residues include Cys115, Cys119, and Cys122. S-adenosyl-L-methionine is bound by residues 179-180, Ser211, 233-235, and Asn310; these read GE and SLH. The active-site S-methylcysteine intermediate is Cys353.

Belongs to the radical SAM superfamily. RlmN family. [4Fe-4S] cluster serves as cofactor.

The protein resides in the cytoplasm. It catalyses the reaction adenosine(2503) in 23S rRNA + 2 reduced [2Fe-2S]-[ferredoxin] + 2 S-adenosyl-L-methionine = 2-methyladenosine(2503) in 23S rRNA + 5'-deoxyadenosine + L-methionine + 2 oxidized [2Fe-2S]-[ferredoxin] + S-adenosyl-L-homocysteine. The enzyme catalyses adenosine(37) in tRNA + 2 reduced [2Fe-2S]-[ferredoxin] + 2 S-adenosyl-L-methionine = 2-methyladenosine(37) in tRNA + 5'-deoxyadenosine + L-methionine + 2 oxidized [2Fe-2S]-[ferredoxin] + S-adenosyl-L-homocysteine. Specifically methylates position 2 of adenine 2503 in 23S rRNA and position 2 of adenine 37 in tRNAs. m2A2503 modification seems to play a crucial role in the proofreading step occurring at the peptidyl transferase center and thus would serve to optimize ribosomal fidelity. This is Dual-specificity RNA methyltransferase RlmN from Bordetella parapertussis (strain 12822 / ATCC BAA-587 / NCTC 13253).